The following is a 431-amino-acid chain: Histidinol dehydrogenase (431 aa).

NAD(+)-binding residues include Y127, Q189, and N212. Residues S237, Q259, and H262 each coordinate substrate. Residues Q259 and H262 each contribute to the Zn(2+) site. Catalysis depends on proton acceptor residues E326 and H327. 4 residues coordinate substrate: H327, D360, E414, and H419. D360 contributes to the Zn(2+) binding site. Residue H419 participates in Zn(2+) binding.

The protein belongs to the histidinol dehydrogenase family. Zn(2+) is required as a cofactor.

It carries out the reaction L-histidinol + 2 NAD(+) + H2O = L-histidine + 2 NADH + 3 H(+). It functions in the pathway amino-acid biosynthesis; L-histidine biosynthesis; L-histidine from 5-phospho-alpha-D-ribose 1-diphosphate: step 9/9. In terms of biological role, catalyzes the sequential NAD-dependent oxidations of L-histidinol to L-histidinaldehyde and then to L-histidine. In Xylella fastidiosa (strain 9a5c), this protein is Histidinol dehydrogenase.